The following is a 704-amino-acid chain: MASAAFKETDMAGALSPVSSQTTNSSSLKGLSTLSSKVTSVLSTSYADSEFRDALSLLDSRGIQNTAEARRRLRLDLHREVIDSNGEIIDEFGRVADQLRRIGNTLEKLNNSYAEMKTQVTKAHECTSPVLQEASTLIAQKRQVEIKQRLLKSFSGHFLLPEDEVAILTLTSEPVDDRFFNVLAKARRIRKDCEILLGFENQTSGLQIMEQTSRNLDLAFQKLYRWIQREFKTLNLESPQLGSAIRRALRALAERPSLFQNCLDFFAEARENVLSDAFFTALTGTTSGGTVDHSVKPIEMAAHDPLRYVGDMLAWSHSATVSEREALEVLFVSDGDAIAKGIRSGRDTEVWRLVAEDGEEAPEFDPIKALNELVDRNVSGAARLLRQRVEQVIQTNEETILAYKLANLLGFYRVMFAKLLTEESILVECIRNLEAEALRQFRSLMRDYIANLQGEFQHVPPTLEPPDFLVPSLQQLDAIMKTYETSLTASGDREADFQPILAEALDPFIAGCRNIGKALAPPKDSVFLINCLMAIKRVLMPFDFAKGRVEELGEEIGRESSKLSESQYLFFREASGLAEVFDAVQSLTDKPEDVERVRTLAPLAPAALVHASQRLDDFLPSALLDALENIKYLQDSTMARKITEEAAEKFCLNFEHVEYILMYADESAGQTPQAERSSEDDYGGPQLLRTLFPRTTEEIRVLLS.

This sequence belongs to the COG6 family.

The protein localises to the golgi apparatus membrane. Acts as a component of the peripheral membrane COG complex that is involved in intra-Golgi protein trafficking. COG is located at the cis-Golgi, and regulates tethering of retrograde intra-Golgi vesicles and possibly a number of other membrane trafficking events. The polypeptide is Conserved oligomeric Golgi complex subunit 6 (COG6) (Pyricularia oryzae (strain 70-15 / ATCC MYA-4617 / FGSC 8958) (Rice blast fungus)).